A 1190-amino-acid polypeptide reads, in one-letter code: DNA-directed RNA polymerase subunit beta (1190 aa).

It belongs to the RNA polymerase beta chain family. As to quaternary structure, the RNAP catalytic core consists of 2 alpha, 1 beta, 1 beta' and 1 omega subunit. When a sigma factor is associated with the core the holoenzyme is formed, which can initiate transcription.

The enzyme catalyses RNA(n) + a ribonucleoside 5'-triphosphate = RNA(n+1) + diphosphate. Functionally, DNA-dependent RNA polymerase catalyzes the transcription of DNA into RNA using the four ribonucleoside triphosphates as substrates. The chain is DNA-directed RNA polymerase subunit beta from Streptococcus suis (strain 98HAH33).